Reading from the N-terminus, the 257-residue chain is Imidazole glycerol phosphate synthase subunit HisF (257 aa).

Catalysis depends on residues D12 and D131.

This sequence belongs to the HisA/HisF family. In terms of assembly, heterodimer of HisH and HisF.

It is found in the cytoplasm. The enzyme catalyses 5-[(5-phospho-1-deoxy-D-ribulos-1-ylimino)methylamino]-1-(5-phospho-beta-D-ribosyl)imidazole-4-carboxamide + L-glutamine = D-erythro-1-(imidazol-4-yl)glycerol 3-phosphate + 5-amino-1-(5-phospho-beta-D-ribosyl)imidazole-4-carboxamide + L-glutamate + H(+). The protein operates within amino-acid biosynthesis; L-histidine biosynthesis; L-histidine from 5-phospho-alpha-D-ribose 1-diphosphate: step 5/9. IGPS catalyzes the conversion of PRFAR and glutamine to IGP, AICAR and glutamate. The HisF subunit catalyzes the cyclization activity that produces IGP and AICAR from PRFAR using the ammonia provided by the HisH subunit. This is Imidazole glycerol phosphate synthase subunit HisF from Cellvibrio japonicus (strain Ueda107) (Pseudomonas fluorescens subsp. cellulosa).